The chain runs to 322 residues: MEWQTRFSPLNLSTQDALPELSISLLDNLGMITMVGDDKKSYLHGQVTCDVVSLEKDQSMLGAHCDAKGKVWSVFRLFHHNDGYAMVQPKSAIEVELKEIKKYAVFSKVTIEESSDIVLGVAGENADAFISTLNADSGEVRTVEGGTAVKVASNRWLLALTAEAAQSLLEDSQATLTTHELWTRFDIEAALPYVAADAQNEHIPQALNVQALGGISFTKGCYTGQETVARAKYRGTNKRAMYIVKGATAEALGEGAIELERSVGENWRSVGALLTHYQFSDNQAMGLIVLPNNLDDDTRLRLVTQPECEWEIAALPYSLDDE.

Position 182 (Trp182) interacts with folate.

This sequence belongs to the tRNA-modifying YgfZ family.

The protein localises to the cytoplasm. Folate-binding protein involved in regulating the level of ATP-DnaA and in the modification of some tRNAs. It is probably a key factor in regulatory networks that act via tRNA modification, such as initiation of chromosomal replication. In Vibrio campbellii (strain ATCC BAA-1116), this protein is tRNA-modifying protein YgfZ.